The following is an 84-amino-acid chain: CDC42 small effector protein 2 (84 aa).

Residues Cys10 and Cys11 are each lipidated (S-palmitoyl cysteine). Positions 29 to 42 constitute a CRIB domain; the sequence is IGEPTNFVHTAHVG. Ser43 and Ser52 each carry phosphoserine.

It belongs to the CDC42SE/SPEC family. As to quaternary structure, interacts with CDC42 (in GTP-bound form). Interacts weakly with RAC1 and not at all with RHOA.

The protein resides in the cytoplasm. It localises to the cytoskeleton. Its subcellular location is the cell membrane. It is found in the cell projection. The protein localises to the phagocytic cup. Functionally, probably involved in the organization of the actin cytoskeleton by acting downstream of CDC42, inducing actin filament assembly. Alters CDC42-induced cell shape changes. In activated T-cells, may play a role in CDC42-mediated F-actin accumulation at the immunological synapse. May play a role in early contractile events in phagocytosis in macrophages. In Bos taurus (Bovine), this protein is CDC42 small effector protein 2 (CDC42SE2).